Here is a 248-residue protein sequence, read N- to C-terminus: tRNA pseudouridine synthase A (248 aa).

Catalysis depends on aspartate 53, which acts as the Nucleophile. Tyrosine 111 provides a ligand contact to substrate.

This sequence belongs to the tRNA pseudouridine synthase TruA family. As to quaternary structure, homodimer.

It catalyses the reaction uridine(38/39/40) in tRNA = pseudouridine(38/39/40) in tRNA. Formation of pseudouridine at positions 38, 39 and 40 in the anticodon stem and loop of transfer RNAs. The protein is tRNA pseudouridine synthase A of Listeria welshimeri serovar 6b (strain ATCC 35897 / DSM 20650 / CCUG 15529 / CIP 8149 / NCTC 11857 / SLCC 5334 / V8).